The following is a 350-amino-acid chain: Chlorophyll a/b light-harvesting protein PcbA (350 aa).

Helical transmembrane passes span 26 to 46 (LSAH…ITLF), 62 to 82 (LILI…GQVV), 87 to 107 (YFVI…GALY), 214 to 234 (IAVV…FPWA), 248 to 268 (LSAS…FSAV), and 309 to 329 (LCNV…WHAL).

The protein belongs to the PsbB/PsbC family. IsiA/Pcb subfamily. The antenna complex consists of chlorophylls (a and b) and chlorophyll a/b binding proteins. Chlorophyll a is required as a cofactor. Requires chlorophyll b as cofactor.

It localises to the cellular thylakoid membrane. The antenna complex functions as a light receptor, it captures and delivers excitation energy to photosystems II and I. The Prochlorales pcb genes are not related to higher plant LHCs. This Prochlorothrix hollandica protein is Chlorophyll a/b light-harvesting protein PcbA (pcbA).